The chain runs to 258 residues: 5'-nucleotidase SurE (258 aa).

Residues D13, D14, S44, and N92 each contribute to the a divalent metal cation site. The interval 237–258 (SPLTAPHSTEHHDALDGIATEF) is disordered.

Belongs to the SurE nucleotidase family. A divalent metal cation is required as a cofactor.

It is found in the cytoplasm. It carries out the reaction a ribonucleoside 5'-phosphate + H2O = a ribonucleoside + phosphate. Nucleotidase that shows phosphatase activity on nucleoside 5'-monophosphates. This chain is 5'-nucleotidase SurE, found in Halobacterium salinarum (strain ATCC 29341 / DSM 671 / R1).